A 476-amino-acid polypeptide reads, in one-letter code: Angiotensinogen (476 aa).

The signal sequence occupies residues 1–24 (MAPAGLSLGATILCLLAWAGLAAG). C42 and C161 are oxidised to a cystine. The tract at residues 45-64 (LEKPSVETPADPTLTPVPIQ) is disordered. An N-linked (GlcNAc...) asparagine glycan is attached at N295.

This sequence belongs to the serpin family. In terms of processing, in response to low blood pressure, the enzyme renin/REN cleaves angiotensinogen to produce angiotensin-1. Angiotensin-1 is a substrate of ACE (angiotensin converting enzyme) that removes a dipeptide to yield the physiologically active peptide angiotensin-2. Angiotensin-1 and angiotensin-2 can be further processed to generate angiotensin-3, angiotensin-4. Angiotensin 1-9 is cleaved from angiotensin-1 by ACE2 and can be further processed by ACE to produce angiotensin 1-7, angiotensin 1-5 and angiotensin 1-4. Angiotensin 1-7 has also been proposed to be cleaved from angiotensin-2 by ACE2 or from angiotensin-1 by MME (neprilysin). The disulfide bond is labile. Angiotensinogen is present in the circulation in a near 40:60 ratio with the oxidized disulfide-bonded form, which preferentially interacts with receptor-bound renin.

The protein localises to the secreted. Functionally, essential component of the renin-angiotensin system (RAS), a potent regulator of blood pressure, body fluid and electrolyte homeostasis. Acts directly on vascular smooth muscle as a potent vasoconstrictor, affects cardiac contractility and heart rate through its action on the sympathetic nervous system, and alters renal sodium and water absorption through its ability to stimulate the zona glomerulosa cells of the adrenal cortex to synthesize and secrete aldosterone. Acts by binding to angiotensin receptors AGTR1 and AGTR2. Also binds the DEAR/FBXW7-AS1 receptor. In terms of biological role, stimulates aldosterone release. Its function is as follows. Is a ligand for the G-protein coupled receptor MAS1. Has vasodilator and antidiuretic effects. Has an antithrombotic effect that involves MAS1-mediated release of nitric oxide from platelets. This is Angiotensinogen (AGT) from Ovis aries (Sheep).